The chain runs to 279 residues: Tryptophan synthase alpha chain (279 aa).

Catalysis depends on proton acceptor residues Glu50 and Asp61.

The protein belongs to the TrpA family. In terms of assembly, tetramer of two alpha and two beta chains.

The enzyme catalyses (1S,2R)-1-C-(indol-3-yl)glycerol 3-phosphate + L-serine = D-glyceraldehyde 3-phosphate + L-tryptophan + H2O. It functions in the pathway amino-acid biosynthesis; L-tryptophan biosynthesis; L-tryptophan from chorismate: step 5/5. Functionally, the alpha subunit is responsible for the aldol cleavage of indoleglycerol phosphate to indole and glyceraldehyde 3-phosphate. The polypeptide is Tryptophan synthase alpha chain (Sinorhizobium fredii (strain NBRC 101917 / NGR234)).